Here is a 508-residue protein sequence, read N- to C-terminus: Aldehyde dehydrogenase family 7 member A1 (508 aa).

244 to 249 (GSSKVG) is an NAD(+) binding site. Catalysis depends on Glu-266, which acts as the Proton acceptor. The active-site Nucleophile is the Cys-300.

Belongs to the aldehyde dehydrogenase family. In terms of assembly, homotetramer.

It catalyses the reaction an aldehyde + NAD(+) + H2O = a carboxylate + NADH + 2 H(+). In terms of biological role, may play a role in fruit development. This chain is Aldehyde dehydrogenase family 7 member A1, found in Malus domestica (Apple).